Consider the following 209-residue polypeptide: Ribosomal RNA large subunit methyltransferase E (209 aa).

The S-adenosyl-L-methionine site is built by G63, W65, D83, D99, and D124. K164 acts as the Proton acceptor in catalysis. One can recognise a TRAM domain in the interval E191–G209.

The protein belongs to the class I-like SAM-binding methyltransferase superfamily. RNA methyltransferase RlmE family.

It localises to the cytoplasm. It catalyses the reaction uridine(2552) in 23S rRNA + S-adenosyl-L-methionine = 2'-O-methyluridine(2552) in 23S rRNA + S-adenosyl-L-homocysteine + H(+). Specifically methylates the uridine in position 2552 of 23S rRNA at the 2'-O position of the ribose in the fully assembled 50S ribosomal subunit. The polypeptide is Ribosomal RNA large subunit methyltransferase E (Histophilus somni (strain 129Pt) (Haemophilus somnus)).